Consider the following 590-residue polypeptide: Rho GTPase-activating protein 36 (590 aa).

Residues 214 to 414 (MSLNPIAQQI…AMIDNWDILF (201 aa)) form the Rho-GAP domain. The disordered stretch occupies residues 526–590 (IPNNEDTDSD…KGKFATRFFP (65 aa)).

As to quaternary structure, may interacts (via the Rho-GAP domain) with the active form of RAC1.

Functionally, GTPase activator for the Rho-type GTPases by converting them to an inactive GDP-bound state. In Mus musculus (Mouse), this protein is Rho GTPase-activating protein 36 (Arhgap36).